The sequence spans 316 residues: Ribosomal protein L11 methyltransferase (316 aa).

Positions 157, 178, 200, and 243 each coordinate S-adenosyl-L-methionine.

Belongs to the methyltransferase superfamily. PrmA family.

It is found in the cytoplasm. It catalyses the reaction L-lysyl-[protein] + 3 S-adenosyl-L-methionine = N(6),N(6),N(6)-trimethyl-L-lysyl-[protein] + 3 S-adenosyl-L-homocysteine + 3 H(+). Functionally, methylates ribosomal protein L11. In Streptococcus pneumoniae serotype 2 (strain D39 / NCTC 7466), this protein is Ribosomal protein L11 methyltransferase.